Consider the following 194-residue polypeptide: ATP synthase subunit 5, mitochondrial (194 aa).

F-type ATP synthases have 2 components, the catalytic core F(1) and the membrane-embedded component F(0), linked together by a central stalk and a peripheral stalk. The central stalk, also called rotor shaft, is often seen as part of F(1). The peripheral stalk is seen as part of F(0). F(0) contains the membrane channel next to the rotor. F-type ATP synthases form dimers but each monomer functions independently in ATP generation. The dimer consists of 18 different polypeptides: ATP1 (subunit alpha, part of F(1), 3 molecules per monomer), ATP2 (subunit beta, part of F(1), 3 molecules per monomer), ATP3 (subunit gamma, part of the central stalk), ATP4 (subunit b, part of the peripheral stalk), ATP5/OSCP (subunit 5/OSCP, part of the peripheral stalk), ATP6 (subunit a, part of the peripheral stalk), ATP7 (subunit d, part of the peripheral stalk), ATP8 (subunit 8, part of the peripheral stalk), OLI1 (subunit c, part of the rotor, 10 molecules per monomer), ATP14 (subunit h, part of the peripheral stalk), ATP15 (subunit epsilon, part of the central stalk), ATP16 (subunit delta, part of the central stalk), ATP17 (subunit f, part of the peripheral stalk), ATP18 (subunit i/j, part of the peripheral stalk). Dimer-specific subunits are ATP19 (subunit k, at interface between monomers), ATP20 (subunit g, at interface between monomers), TIM11 (subunit e, at interface between monomers). Also contains subunit L.

The protein localises to the mitochondrion inner membrane. In terms of biological role, mitochondrial membrane ATP synthase (F(1)F(0) ATP synthase or Complex V) produces ATP from ADP in the presence of a proton gradient across the membrane which is generated by electron transport complexes of the respiratory chain. F-type ATP synthases consist of two structural domains, F(1) - containing the extramembraneous catalytic core, and F(0) - containing the membrane proton channel, linked together by a central stalk and a peripheral stalk. During catalysis, ATP synthesis in the catalytic domain of F(1) is coupled via a rotary mechanism of the central stalk subunits to proton translocation. Part of the complex F(0) domain and the peripheral stalk, which acts as a stator to hold the catalytic alpha/ATP1(3)beta/ATP2(3) subcomplex and subunit a/ATP6 static relative to the rotary elements. This chain is ATP synthase subunit 5, mitochondrial, found in Pichia angusta (Yeast).